The sequence spans 318 residues: MRSTPPASAGRSTPPALAGHSTPPALAGHSTLCGRPVAGDRALIMAIVNRTPDSFYDKGATFSDAAARDAVHRAVADGADVIDVGGVKAGPGERVDVDTEITRLVPFIEWLRGAYPDQLISVDTWRAQVAKAACAAGADLINDTWGGVDPAMPEVAAEFGAGLVCAHTGGALPRTRPFRVSYGTTTRGVVDAVISQVTAAAERAVAAGVAREKVLIDPAHDFGKNTFHGLLLLRHVADLVMTGWPVLMALSNKDVVGETLGVDLTERLEGTLAATALAAAAGARMFRVHEVAATRRVLEMVASIQGVRPPTRTVRGLA.

The interval 1–25 (MRSTPPASAGRSTPPALAGHSTPPA) is disordered. Residues 42 to 299 (ALIMAIVNRT…EVAATRRVLE (258 aa)) enclose the Pterin-binding domain.

This sequence belongs to the DHPS family. As to quaternary structure, homodimer.

Functionally, has very low affinity for the DHPS substrate 6-hydroxymethyl-7,8-dihydropterin-pyrophosphate, but can bind the inhibitor dapsone. Seems to lack dihydropteroate synthase activity, and does probably not function in folate metabolism. This chain is Inactive dihydropteroate synthase 2 (folP2), found in Mycobacterium bovis (strain ATCC BAA-935 / AF2122/97).